The primary structure comprises 485 residues: Glutamate--tRNA ligase (485 aa).

The 'HIGH' region signature appears at 11–21 (PSPTGHLHIGN). Residues 252–256 (KLSKR) carry the 'KMSKS' region motif. Position 255 (lysine 255) interacts with ATP.

This sequence belongs to the class-I aminoacyl-tRNA synthetase family. Glutamate--tRNA ligase type 1 subfamily. In terms of assembly, monomer.

It is found in the cytoplasm. It carries out the reaction tRNA(Glu) + L-glutamate + ATP = L-glutamyl-tRNA(Glu) + AMP + diphosphate. In terms of biological role, catalyzes the attachment of glutamate to tRNA(Glu) in a two-step reaction: glutamate is first activated by ATP to form Glu-AMP and then transferred to the acceptor end of tRNA(Glu). This chain is Glutamate--tRNA ligase, found in Bacillus thuringiensis (strain Al Hakam).